A 468-amino-acid polypeptide reads, in one-letter code: Ribulose bisphosphate carboxylase large chain (468 aa).

Lysine 5 is modified (N6,N6,N6-trimethyllysine). Substrate is bound by residues asparagine 114 and threonine 164. Residue lysine 166 is the Proton acceptor of the active site. A substrate-binding site is contributed by lysine 168. 3 residues coordinate Mg(2+): lysine 192, aspartate 194, and glutamate 195. An N6-carboxylysine modification is found at lysine 192. Catalysis depends on histidine 285, which acts as the Proton acceptor. Substrate contacts are provided by arginine 286, histidine 318, and serine 370.

This sequence belongs to the RuBisCO large chain family. Type I subfamily. Heterohexadecamer of 8 large chains and 8 small chains; disulfide-linked. The disulfide link is formed within the large subunit homodimers. It depends on Mg(2+) as a cofactor. Post-translationally, the disulfide bond which can form in the large chain dimeric partners within the hexadecamer appears to be associated with oxidative stress and protein turnover.

The protein localises to the plastid. The protein resides in the chloroplast. The enzyme catalyses 2 (2R)-3-phosphoglycerate + 2 H(+) = D-ribulose 1,5-bisphosphate + CO2 + H2O. The catalysed reaction is D-ribulose 1,5-bisphosphate + O2 = 2-phosphoglycolate + (2R)-3-phosphoglycerate + 2 H(+). RuBisCO catalyzes two reactions: the carboxylation of D-ribulose 1,5-bisphosphate, the primary event in carbon dioxide fixation, as well as the oxidative fragmentation of the pentose substrate in the photorespiration process. Both reactions occur simultaneously and in competition at the same active site. This Tecoma stans (Yellow bells) protein is Ribulose bisphosphate carboxylase large chain.